Here is a 380-residue protein sequence, read N- to C-terminus: Dual-specificity RNA methyltransferase RlmN (380 aa).

Catalysis depends on Glu-94, which acts as the Proton acceptor. One can recognise a Radical SAM core domain in the interval 100–339; it reads DGDRATLCVS…VTVRKTRGDD (240 aa). Cys-107 and Cys-344 form a disulfide bridge. Residues Cys-114, Cys-118, and Cys-121 each contribute to the [4Fe-4S] cluster site. Residues 168–169, Ser-200, 222–224, and Asn-301 each bind S-adenosyl-L-methionine; these read GE and SLH. Cys-344 acts as the S-methylcysteine intermediate in catalysis.

This sequence belongs to the radical SAM superfamily. RlmN family. It depends on [4Fe-4S] cluster as a cofactor.

The protein resides in the cytoplasm. The catalysed reaction is adenosine(2503) in 23S rRNA + 2 reduced [2Fe-2S]-[ferredoxin] + 2 S-adenosyl-L-methionine = 2-methyladenosine(2503) in 23S rRNA + 5'-deoxyadenosine + L-methionine + 2 oxidized [2Fe-2S]-[ferredoxin] + S-adenosyl-L-homocysteine. It catalyses the reaction adenosine(37) in tRNA + 2 reduced [2Fe-2S]-[ferredoxin] + 2 S-adenosyl-L-methionine = 2-methyladenosine(37) in tRNA + 5'-deoxyadenosine + L-methionine + 2 oxidized [2Fe-2S]-[ferredoxin] + S-adenosyl-L-homocysteine. Functionally, specifically methylates position 2 of adenine 2503 in 23S rRNA and position 2 of adenine 37 in tRNAs. m2A2503 modification seems to play a crucial role in the proofreading step occurring at the peptidyl transferase center and thus would serve to optimize ribosomal fidelity. In Vibrio atlanticus (strain LGP32) (Vibrio splendidus (strain Mel32)), this protein is Dual-specificity RNA methyltransferase RlmN.